A 66-amino-acid polypeptide reads, in one-letter code: Large ribosomal subunit protein bL31 (66 aa).

Zn(2+)-binding residues include Cys-16, Cys-18, Cys-36, and Cys-39.

This sequence belongs to the bacterial ribosomal protein bL31 family. Type A subfamily. As to quaternary structure, part of the 50S ribosomal subunit. Zn(2+) serves as cofactor.

Binds the 23S rRNA. The chain is Large ribosomal subunit protein bL31 from Clostridioides difficile (strain 630) (Peptoclostridium difficile).